A 345-amino-acid polypeptide reads, in one-letter code: Ferredoxin--NADP reductase (345 aa).

Positions 38, 46, 51, 91, 129, 295, and 336 each coordinate FAD.

This sequence belongs to the ferredoxin--NADP reductase type 2 family. In terms of assembly, homodimer. The cofactor is FAD.

The enzyme catalyses 2 reduced [2Fe-2S]-[ferredoxin] + NADP(+) + H(+) = 2 oxidized [2Fe-2S]-[ferredoxin] + NADPH. In Rhodospirillum rubrum (strain ATCC 11170 / ATH 1.1.1 / DSM 467 / LMG 4362 / NCIMB 8255 / S1), this protein is Ferredoxin--NADP reductase.